A 528-amino-acid polypeptide reads, in one-letter code: Protein spinster homolog 1 (528 aa).

A disordered region spans residues 1 to 38 (MAGSDTAPFLSQADDPDDGPAPGHPGLPGPMGNPKSGE). A2 carries the N-acetylalanine modification. 12 consecutive transmembrane segments (helical) span residues 60–80 (LIVVVLCYINLLNYMDRFTVA), 98–118 (GLIQTVFISSYMVLAPVFGYL), 126–146 (YLMCGGIAFWSLVTLGSSFIP), 160–180 (VGVGEASYSTIAPTLIADLFV), 187–207 (MLSIFYFAIPVGSGLGYIAGS), 218–238 (WALRVTPGLGVLAVLLLFLVV), 278–298 (LGFTAVAFVTGSLALWAPAFL), 323–343 (LIFGLITCLTGVLGVGLGVEI), 357–377 (LVCAAGLLGSSPFLFLSLACA), 381–401 (IVATYIFIFIGETLLSMNWAI), 421–441 (FQIVLSHLLGDAGSPYLIGLI), and 465–485 (MLCAFVGALGGAAFLGTAMFI). At S518 the chain carries Phosphoserine.

The protein belongs to the major facilitator superfamily. Spinster (TC 2.A.1.49) family. Interacts with BCL2 and BCL2L1.

The protein localises to the lysosome membrane. The catalysed reaction is a 1-acyl-sn-glycero-3-phosphocholine(out) + H(+)(out) = a 1-acyl-sn-glycero-3-phosphocholine(in) + H(+)(in). It catalyses the reaction 1-hexadecanoyl-sn-glycero-3-phosphocholine(out) + H(+)(out) = 1-hexadecanoyl-sn-glycero-3-phosphocholine(in) + H(+)(in). It carries out the reaction 1-(9Z-octadecenoyl)-sn-glycero-3-phosphocholine(out) + H(+)(out) = 1-(9Z-octadecenoyl)-sn-glycero-3-phosphocholine(in) + H(+)(in). The enzyme catalyses 1-(5Z,8Z,11Z,14Z-eicosatetraenoyl)-sn-glycero-3-phosphocholine(out) + H(+)(out) = 1-(5Z,8Z,11Z,14Z-eicosatetraenoyl)-sn-glycero-3-phosphocholine(in) + H(+)(in). The catalysed reaction is 1-(4Z,7Z,10Z,13Z,16Z,19Z-docosahexaenoyl)-sn-glycero-3-phosphocholine(out) + H(+)(out) = 1-(4Z,7Z,10Z,13Z,16Z,19Z-docosahexaenoyl)-sn-glycero-3-phosphocholine(in) + H(+)(in). It catalyses the reaction a 1-acyl-sn-glycero-3-phosphoethanolamine(out) + H(+)(out) = a 1-acyl-sn-glycero-3-phosphoethanolamine(in) + H(+)(in). It carries out the reaction 1-(9Z-octadecenoyl)-sn-glycero-3-phosphoethanolamine(out) + H(+)(out) = 1-(9Z-octadecenoyl)-sn-glycero-3-phosphoethanolamine(in) + H(+)(in). The enzyme catalyses 1-acyl-sn-glycero-3-phospho-(1'-sn-glycerol)(out) + H(+)(out) = 1-acyl-sn-glycero-3-phospho-(1'-sn-glycerol)(in) + H(+)(in). The catalysed reaction is 1-(9Z-octadecenoyl)-sn-glycero-3-phospho-(1'-sn-glycerol)(out) + H(+)(out) = 1-(9Z-octadecenoyl)-sn-glycero-3-phospho-(1'-sn-glycerol)(in) + H(+)(in). It catalyses the reaction a 1-O-(1Z-alkenyl)-sn-glycero-3-phosphocholine(out) + H(+)(out) = a 1-O-(1Z-alkenyl)-sn-glycero-3-phosphocholine(in) + H(+)(in). It carries out the reaction 1-(1Z-hexadecenyl)-sn-glycero-3-phosphocholine(out) + H(+)(out) = 1-(1Z-hexadecenyl)-sn-glycero-3-phosphocholine(in) + H(+)(in). The enzyme catalyses a 1-O-(1Z-alkenyl)-sn-glycero-3-phosphoethanolamine(out) + H(+)(out) = a 1-O-(1Z-alkenyl)-sn-glycero-3-phosphoethanolamine(in) + H(+)(in). The catalysed reaction is 1-O-(1Z-hexadecenyl)-sn-glycero-3-phosphoethanolamine(out) + H(+)(out) = 1-O-(1Z-hexadecenyl)-sn-glycero-3-phosphoethanolamine(in) + H(+)(in). Its function is as follows. Plays a critical role in the phospholipid salvage pathway from lysosomes to the cytosol. Mediates the rate-limiting, proton-dependent, lysosomal efflux of lysophospholipids, which can then be reacylated by acyltransferases in the endoplasmic reticulum to form phospholipids. Selective for zwitterionic headgroups such as lysophosphatidylcholine (LPC) and lysophosphatidylethanolamine (LPE), can also transport lysophosphatidylglycerol (LPG), but not other anionic lysophospholipids, sphingosine, nor sphingomyelin. Transports lysophospholipids with saturated, monounsaturated, and polyunsaturated fatty acids, such as 1-hexadecanoyl-sn-glycero-3-phosphocholine, 1-(9Z-octadecenoyl)-sn-glycero-3-phosphocholine and 1-(4Z,7Z,10Z,13Z,16Z,19Z-docosahexaenoyl)-sn-glycero-3-phosphocholine, respectively. Can also transport lysoplasmalogen (LPC with a fatty alcohol) such as 1-(1Z-hexadecenyl)-sn-glycero-3-phosphocholine. Essential player in lysosomal homeostasis. Crucial for cell survival under conditions of nutrient limitation. May be involved in necrotic or autophagic cell death. This chain is Protein spinster homolog 1 (Spns1), found in Rattus norvegicus (Rat).